The primary structure comprises 174 residues: Crossover junction endodeoxyribonuclease RuvC (174 aa).

Residues Asp-8, Glu-67, and Asp-139 contribute to the active site. Asp-8, Glu-67, and Asp-139 together coordinate Mg(2+).

Belongs to the RuvC family. In terms of assembly, homodimer which binds Holliday junction (HJ) DNA. The HJ becomes 2-fold symmetrical on binding to RuvC with unstacked arms; it has a different conformation from HJ DNA in complex with RuvA. In the full resolvosome a probable DNA-RuvA(4)-RuvB(12)-RuvC(2) complex forms which resolves the HJ. Requires Mg(2+) as cofactor.

The protein resides in the cytoplasm. It carries out the reaction Endonucleolytic cleavage at a junction such as a reciprocal single-stranded crossover between two homologous DNA duplexes (Holliday junction).. Functionally, the RuvA-RuvB-RuvC complex processes Holliday junction (HJ) DNA during genetic recombination and DNA repair. Endonuclease that resolves HJ intermediates. Cleaves cruciform DNA by making single-stranded nicks across the HJ at symmetrical positions within the homologous arms, yielding a 5'-phosphate and a 3'-hydroxyl group; requires a central core of homology in the junction. The consensus cleavage sequence is 5'-(A/T)TT(C/G)-3'. Cleavage occurs on the 3'-side of the TT dinucleotide at the point of strand exchange. HJ branch migration catalyzed by RuvA-RuvB allows RuvC to scan DNA until it finds its consensus sequence, where it cleaves and resolves the cruciform DNA. This is Crossover junction endodeoxyribonuclease RuvC from Pseudomonas putida (strain W619).